The following is an 87-amino-acid chain: Cell division topological specificity factor (87 aa).

The protein belongs to the MinE family.

Its function is as follows. Prevents the cell division inhibition by proteins MinC and MinD at internal division sites while permitting inhibition at polar sites. This ensures cell division at the proper site by restricting the formation of a division septum at the midpoint of the long axis of the cell. The chain is Cell division topological specificity factor from Vibrio parahaemolyticus serotype O3:K6 (strain RIMD 2210633).